A 426-amino-acid polypeptide reads, in one-letter code: Synaptotagmin-13 (426 aa).

The Vesicular segment spans residues Met1 to Pro6. A helical transmembrane segment spans residues Val7–Leu29. The Cytoplasmic portion of the chain corresponds to Cys30 to Leu426. C2 domains lie at Gln158 to Gly275 and Gly287 to His422.

The protein belongs to the synaptotagmin family. In terms of assembly, interacts with NRXN1. As to expression, expressed in brain, pancreas and kidney.

The protein resides in the membrane. Its function is as follows. May be involved in transport vesicle docking to the plasma membrane. This chain is Synaptotagmin-13 (SYT13), found in Homo sapiens (Human).